Consider the following 324-residue polypeptide: Adipolin (324 aa).

The N-terminal stretch at 1–24 is a signal peptide; sequence MRCWVWLLVAIVLCQQLSVVRVLA. 2 disordered regions span residues 28–66 and 83–121; these read ERKK…DPGL and GANS…MPGA. The segment covering 40–49 has biased composition (polar residues); it reads EPFNVSLSNS. The N-linked (GlcNAc...) asparagine glycan is linked to Asn43. Basic and acidic residues predominate over residues 50–60; sequence EELHETDKLSE. Positions 86–98 are enriched in basic residues; that stretch reads SKKKCKGKDKKLR. The span at 103–118 shows a compositional bias: pro residues; that stretch reads PPGPPGPQGPPGPPGM. In terms of domain architecture, C1q spans 169-324; sequence YRRVDEGFHC…SDFMGILMGL (156 aa).

Belongs to the adipolin/erythroferrone family. Homomultimer; disulfide-linked.

It is found in the secreted. In terms of biological role, insulin-sensitizing adipocyte-secreted protein (adipokine) that regulates glucose metabolism in liver and adipose tissue. This Xenopus tropicalis (Western clawed frog) protein is Adipolin (c1qtnf12).